A 108-amino-acid chain; its full sequence is Thiosulfate sulfurtransferase GlpE (108 aa).

One can recognise a Rhodanese domain in the interval H17–A105. C65 (cysteine persulfide intermediate) is an active-site residue.

Belongs to the GlpE family.

The protein localises to the cytoplasm. The enzyme catalyses thiosulfate + hydrogen cyanide = thiocyanate + sulfite + 2 H(+). It carries out the reaction thiosulfate + [thioredoxin]-dithiol = [thioredoxin]-disulfide + hydrogen sulfide + sulfite + 2 H(+). Its function is as follows. Transferase that catalyzes the transfer of sulfur from thiosulfate to thiophilic acceptors such as cyanide or dithiols. May function in a CysM-independent thiosulfate assimilation pathway by catalyzing the conversion of thiosulfate to sulfite, which can then be used for L-cysteine biosynthesis. This Salmonella arizonae (strain ATCC BAA-731 / CDC346-86 / RSK2980) protein is Thiosulfate sulfurtransferase GlpE.